We begin with the raw amino-acid sequence, 206 residues long: ATP-dependent Clp protease proteolytic subunit 1 (206 aa).

The active-site Nucleophile is the serine 100. Residue histidine 125 is part of the active site.

The protein belongs to the peptidase S14 family. Fourteen ClpP subunits assemble into 2 heptameric rings which stack back to back to give a disk-like structure with a central cavity, resembling the structure of eukaryotic proteasomes.

It localises to the cytoplasm. The catalysed reaction is Hydrolysis of proteins to small peptides in the presence of ATP and magnesium. alpha-casein is the usual test substrate. In the absence of ATP, only oligopeptides shorter than five residues are hydrolyzed (such as succinyl-Leu-Tyr-|-NHMec, and Leu-Tyr-Leu-|-Tyr-Trp, in which cleavage of the -Tyr-|-Leu- and -Tyr-|-Trp bonds also occurs).. Functionally, cleaves peptides in various proteins in a process that requires ATP hydrolysis. Has a chymotrypsin-like activity. Plays a major role in the degradation of misfolded proteins. The polypeptide is ATP-dependent Clp protease proteolytic subunit 1 (Myxococcus xanthus (strain DK1622)).